Reading from the N-terminus, the 374-residue chain is Cell wall integrity and stress response component 1 (374 aa).

An N-terminal signal peptide occupies residues 1-29 (MVFLNSSPFKGRLLFFVYLLIISTRLVAA). The Extracellular segment spans residues 30–292 (DMNTQYGCYL…SNHTSLNAGA (263 aa)). In terms of domain architecture, WSC spans 31 to 119 (MNTQYGCYLV…DLYWSVYLTG (89 aa)). Residues 132–236 (VSSTTSSSSS…SSSSSSRPSS (105 aa)) form a disordered region. N-linked (GlcNAc...) asparagine glycans are attached at residues Asn278 and Asn284. A helical membrane pass occupies residues 293–313 (IVGIVIGCVAFAVVMALCIFL). Residues 314-374 (YFYFRRFKIR…RKILRVTNLN (61 aa)) lie on the Cytoplasmic side of the membrane. Ser354 is subject to Phosphoserine.

In terms of processing, O-mannosylated.

It is found in the membrane. The protein is Cell wall integrity and stress response component 1 (wsc1) of Schizosaccharomyces pombe (strain 972 / ATCC 24843) (Fission yeast).